The chain runs to 192 residues: Nucleotidase CA_C3379 (192 aa).

This sequence belongs to the 5'(3')-deoxyribonucleotidase family. Mg(2+) serves as cofactor.

It carries out the reaction sugar phosphate + H2O = sugar + phosphate.. In terms of biological role, catalyzes the dephosphorylation of nucleotide monophosphates and of different sugar phosphates in vitro. The protein is Nucleotidase CA_C3379 of Clostridium acetobutylicum (strain ATCC 824 / DSM 792 / JCM 1419 / IAM 19013 / LMG 5710 / NBRC 13948 / NRRL B-527 / VKM B-1787 / 2291 / W).